The chain runs to 317 residues: Melanocyte-stimulating hormone receptor (317 aa).

Residues 1–37 are Extracellular-facing; sequence MPLQGPQRRLLGSLNSTLPATPYLGLTTNQTEPPCLE. N-linked (GlcNAc...) asparagine glycosylation is present at asparagine 29. A helical membrane pass occupies residues 38–63; it reads VSIPDGLFLSLGLVSLVENVLVVTAI. Residues 64-72 are Cytoplasmic-facing; the sequence is AKNRNLHSP. Residues 73–93 form a helical membrane-spanning segment; that stretch reads MYYFICCLAVSDLLVSMSNVL. The Extracellular portion of the chain corresponds to 94–118; sequence EMAILLLLEAGVLATQASVLQQLDN. A helical transmembrane segment spans residues 119-140; sequence IIDVLICGSMVSSLCFLGSIAV. The Cytoplasmic segment spans residues 141 to 163; the sequence is DRYISIFYALRYHSIMMLPRVWR. Residues 164–183 traverse the membrane as a helical segment; it reads AIVAIWVVSVLSSTLFIAYY. Topologically, residues 184–191 are extracellular; that stretch reads NHTAVLLC. Residues 192-211 traverse the membrane as a helical segment; sequence LVTFFVAMLVLMAVLYVHML. At 212 to 240 the chain is on the cytoplasmic side; that stretch reads ARACQHARGIARLHKRQHPIHQGFGLKGA. Residues 241–266 traverse the membrane as a helical segment; the sequence is ATLTILLGVFFLCWGPFFLHLSLLIL. The Extracellular segment spans residues 267–279; it reads CPQHPTCGCVFKN. A helical membrane pass occupies residues 280 to 300; it reads FKLFLTLILCSAIVDPLIYAF. Residues 301–317 are Cytoplasmic-facing; the sequence is RSQELRKTLQEVLLCSW. Cysteine 315 carries S-palmitoyl cysteine lipidation.

It belongs to the G-protein coupled receptor 1 family. Interacts with MGRN1, but does not undergo MGRN1-mediated ubiquitination; this interaction competes with GNAS-binding and thus inhibits agonist-induced cAMP production. Interacts with OPN3; the interaction results in a decrease in MC1R-mediated cAMP signaling and ultimately a decrease in melanin production in melanocytes.

It is found in the cell membrane. In terms of biological role, receptor for MSH (alpha, beta and gamma) and ACTH. The activity of this receptor is mediated by G proteins which activate adenylate cyclase. Mediates melanogenesis, the production of eumelanin (black/brown) and phaeomelanin (red/yellow), via regulation of cAMP signaling in melanocytes. The protein is Melanocyte-stimulating hormone receptor (MC1R) of Equus caballus (Horse).